The following is a 207-amino-acid chain: Small ribosomal subunit protein uS4 (207 aa).

The tract at residues 31–54 is disordered; that stretch reads KSKFETKPGQHGRTSGSRTSDFGL. A compositionally biased stretch (polar residues) spans 42 to 52; it reads GRTSGSRTSDF. Residues 97-158 enclose the S4 RNA-binding domain; that stretch reads SRLDNVVYRM…KAKKQLRVTE (62 aa).

It belongs to the universal ribosomal protein uS4 family. In terms of assembly, part of the 30S ribosomal subunit. Contacts protein S5. The interaction surface between S4 and S5 is involved in control of translational fidelity.

Its function is as follows. One of the primary rRNA binding proteins, it binds directly to 16S rRNA where it nucleates assembly of the body of the 30S subunit. With S5 and S12 plays an important role in translational accuracy. This chain is Small ribosomal subunit protein uS4, found in Methylibium petroleiphilum (strain ATCC BAA-1232 / LMG 22953 / PM1).